Consider the following 125-residue polypeptide: Probable prefoldin subunit 6 (125 aa).

This sequence belongs to the prefoldin subunit beta family. As to quaternary structure, heterohexamer of two PFD-alpha type and four PFD-beta type subunits.

Binds specifically to cytosolic chaperonin (c-CPN) and transfers target proteins to it. Binds to nascent polypeptide chain and promotes folding in an environment in which there are many competing pathways for nonnative proteins. This chain is Probable prefoldin subunit 6, found in Drosophila melanogaster (Fruit fly).